The chain runs to 455 residues: Rhodopsin (455 aa).

At 1 to 34 (MVESTTLVNQTWWYNPTVDIHPHWAKFDPIPDAV) the chain is on the extracellular side. A glycan (N-linked (GlcNAc...) asparagine) is linked at Asn-9. Residues 35-59 (YYSVGIFIGVVGIIGILGNGVVIYL) form a helical membrane-spanning segment. Residues 60–71 (FSKTKSLQTPAN) lie on the Cytoplasmic side of the membrane. Residues 72 to 98 (MFIINLAMSDLSFSAINGFPLKTISAF) form a helical membrane-spanning segment. The Extracellular portion of the chain corresponds to 99 to 110 (MKKWIFGKVACQ). Cys-109 and Cys-187 form a disulfide bridge. Residues 111–132 (LYGLLGGIFGFMSINTMAMISI) traverse the membrane as a helical segment. The short motif at 133 to 135 (DRY) is the 'Ionic lock' involved in activated form stabilization element. The Cytoplasmic portion of the chain corresponds to 133–152 (DRYNVIGRPMAASKKMSHRR). Residues 153–173 (AFLMIIFVWMWSIVWSVGPVF) form a helical membrane-spanning segment. The Extracellular portion of the chain corresponds to 174–200 (NWGAYVPEGILTSCSFDYLSTDPSTRS). Residues 201 to 225 (FILCMYFCGFMLPIIIIAFCYFNIV) form a helical membrane-spanning segment. The Cytoplasmic segment spans residues 226 to 262 (MSVSNHEKEMAAMAKRLNAKELRKAQAGASAEMKLAK). The helical transmembrane segment at 263–284 (ISMVIITQFMLSWSPYAIIALL) threads the bilayer. Residues 285–294 (AQFGPAEWVT) lie on the Extracellular side of the membrane. The chain crosses the membrane as a helical span at residues 295–316 (PYAAELPVLFAKASAIHNPIVY). At Lys-306 the chain carries N6-(retinylidene)lysine. Topologically, residues 317-455 (SVSHPKFREA…QGVDNQAYQA (139 aa)) are cytoplasmic. Residues Cys-337 and Cys-338 are each lipidated (S-palmitoyl cysteine). A compositionally biased stretch (low complexity) spans 378–387 (QKMQAQQAAY). The disordered stretch occupies residues 378 to 455 (QKMQAQQAAY…QGVDNQAYQA (78 aa)). The segment covering 388–433 (QPPPPPQGYPPQGYPPQGAYPPPQGYPPQGYPPQGYPPQGYPPQGA) has biased composition (pro residues). Repeat copies occupy residues 395-399 (GYPPQ), 400-404 (GYPPQ), 412-416 (GYPPQ), 417-421 (GYPPQ), 422-426 (GYPPQ), and 427-431 (GYPPQ). The 6 X 5 AA repeats of G-Y-P-P-Q stretch occupies residues 395 to 431 (GYPPQGYPPQGAYPPPQGYPPQGYPPQGYPPQGYPPQ).

Belongs to the G-protein coupled receptor 1 family. Opsin subfamily. Contains one covalently linked retinal chromophore. Upon light absorption, the covalently bound 11-cis-retinal is converted to all-trans-retinal. After hydrolysis of the Schiff base and release of the covalently bound all-trans-retinal, active rhodopsin is regenerated by binding of a fresh molecule of 11-cis-retinal.

It localises to the cell projection. The protein localises to the rhabdomere membrane. In terms of biological role, photoreceptor required for image-forming vision at low light intensity. Light-induced isomerization of 11-cis to all-trans retinal triggers a conformational change that activates signaling via G-proteins. Signaling mediates the activation of phospholipase C. Subsequent receptor phosphorylation mediates displacement of the bound G-protein alpha subunit by arrestin and terminates signaling. The chain is Rhodopsin (RHO) from Enteroctopus dofleini (North Pacific giant octopus).